The primary structure comprises 203 residues: NAD(P)H-quinone oxidoreductase subunit M, chloroplastic (203 aa).

Residues 1 to 21 (MAASSSYMACAKFSMLGWLGG) constitute a chloroplast transit peptide. Positions 34-48 (SPQEQAEVQESQEVN) are enriched in low complexity. Residues 34–61 (SPQEQAEVQESQEVNAQEEEKVKQPVQP) are disordered.

It belongs to the NDH complex subunit M family. As to quaternary structure, part of the chloroplast NDH complex, composed of a mixture of chloroplast and nucleus encoded subunits. Component of the NDH subcomplex A, at least composed of ndhH, ndhI, ndhJ, ndhK, ndhL, ndhM, ndhN and ndhO.

It localises to the plastid. The protein localises to the chloroplast thylakoid membrane. It carries out the reaction a plastoquinone + NADH + (n+1) H(+)(in) = a plastoquinol + NAD(+) + n H(+)(out). The catalysed reaction is a plastoquinone + NADPH + (n+1) H(+)(in) = a plastoquinol + NADP(+) + n H(+)(out). In terms of biological role, NDH shuttles electrons from NAD(P)H:plastoquinone, via FMN and iron-sulfur (Fe-S) centers, to quinones in the photosynthetic chain and possibly in a chloroplast respiratory chain. The immediate electron acceptor for the enzyme in this species is believed to be plastoquinone. Couples the redox reaction to proton translocation, and thus conserves the redox energy in a proton gradient. The protein is NAD(P)H-quinone oxidoreductase subunit M, chloroplastic of Populus jackii (Balm of Gilead).